Consider the following 148-residue polypeptide: Cysteine proteinase inhibitor 5 (148 aa).

The signal sequence occupies residues 1–25 (MASKLYYAVAPLVLVLLLLAPLSSA). The Secondary area of contact signature appears at 99 to 103 (QVVSG).

Belongs to the cystatin family. Phytocystatin subfamily.

It is found in the secreted. In terms of biological role, specific inhibitor of cysteine proteinases. Probably involved in the regulation of endogenous processes and in defense against pests and pathogens. This is Cysteine proteinase inhibitor 5 from Oryza sativa subsp. japonica (Rice).